The chain runs to 253 residues: Indole-3-glycerol phosphate synthase (253 aa).

The protein belongs to the TrpC family.

The catalysed reaction is 1-(2-carboxyphenylamino)-1-deoxy-D-ribulose 5-phosphate + H(+) = (1S,2R)-1-C-(indol-3-yl)glycerol 3-phosphate + CO2 + H2O. It participates in amino-acid biosynthesis; L-tryptophan biosynthesis; L-tryptophan from chorismate: step 4/5. The polypeptide is Indole-3-glycerol phosphate synthase (Bacillus anthracis (strain A0248)).